The chain runs to 89 residues: Large ribosomal subunit protein bL27 (89 aa).

The interval 1–22 (MAHKKAGGSSRNGRDSAGRRLG) is disordered.

Belongs to the bacterial ribosomal protein bL27 family.

The sequence is that of Large ribosomal subunit protein bL27 from Dinoroseobacter shibae (strain DSM 16493 / NCIMB 14021 / DFL 12).